Here is a 147-residue protein sequence, read N- to C-terminus: uncharacterized protein (147 aa).

In terms of domain architecture, HTH marR-type spans 1 to 137; that stretch reads MRDNTIGSLI…LYELMTKVHK (137 aa). Positions 53–76 form a DNA-binding region, H-T-H motif; the sequence is QMELAEKVTVTQGGISRMLTRLEK.

This is an uncharacterized protein from Bacillus cereus (strain ATCC 14579 / DSM 31 / CCUG 7414 / JCM 2152 / NBRC 15305 / NCIMB 9373 / NCTC 2599 / NRRL B-3711).